A 354-amino-acid polypeptide reads, in one-letter code: Probable disease resistance protein At5g45490 (354 aa).

Residues 33 to 53 adopt a coiled-coil conformation; that stretch reads AKGNLEKKRDDNEEEERLKTE. The region spanning 45-122 is the NB-ARC domain; the sequence is EEEERLKTES…VYAPRVWVSM (78 aa). Position 91 to 98 (91 to 98) interacts with ATP; it reads GEYGVGKT. The tract at residues 328-354 is disordered; sequence DDEVGPVGSTHGQTDSSNRQPANQASS. Polar residues predominate over residues 337–354; sequence THGQTDSSNRQPANQASS.

Possible disease resistance protein. The sequence is that of Probable disease resistance protein At5g45490 from Arabidopsis thaliana (Mouse-ear cress).